The chain runs to 992 residues: Aminopeptidase Q (992 aa).

Over 2–13 (GPPSSSGFYVSR) the chain is Cytoplasmic. The chain crosses the membrane as a helical; Signal-anchor for type II membrane protein span at residues 14–34 (AVALLLAALAAALLLALAVLA). Topologically, residues 35–992 (ALYGRCARVQ…RMTAWLRKNT (958 aa)) are extracellular. The tract at residues 48-92 (LHHGGVPDAASSPRGTQEEQLPTWPPRPTREPAGTATPGHWRPPG) is disordered. N-linked (GlcNAc...) asparagine glycosylation is present at Asn-133. Glu-241 is a substrate binding site. 4 N-linked (GlcNAc...) asparagine glycosylation sites follow: Asn-262, Asn-289, Asn-347, and Asn-361. Residue 380 to 384 (SAMEN) coordinates substrate. His-416 contributes to the Zn(2+) binding site. Glu-417 acts as the Proton acceptor in catalysis. The Zn(2+) site is built by His-420 and Glu-439. Asn-489 carries an N-linked (GlcNAc...) asparagine glycan. Tyr-505 functions as the Proton donor in the catalytic mechanism. N-linked (GlcNAc...) asparagine glycans are attached at residues Asn-584, Asn-602, Asn-609, Asn-655, Asn-811, Asn-850, and Asn-889.

Belongs to the peptidase M1 family. Zn(2+) is required as a cofactor. Expressed in skin. Expression levels do not differ between dark and light skin areas.

It localises to the membrane. Functionally, metalloprotease which may be important for placentation by regulating biological activity of key peptides at the embryo-maternal interface. Involved in coat pigmentation patterns. During skin development, may be required to establish the periodicity of tabby markings, initiating a pre-pattern at or before hair follicle development. The chain is Aminopeptidase Q (LVRN) from Acinonyx jubatus (Cheetah).